Here is a 653-residue protein sequence, read N- to C-terminus: Chaperone protein DnaK (653 aa).

The residue at position 200 (T200) is a Phosphothreonine; by autocatalysis. The disordered stretch occupies residues 612–653; it reads QGAAGAAGAAGGAGAAAGAEAAGASQQADDVVDAEFKEVKKD. Over residues 627-639 the composition is skewed to low complexity; sequence AAGAEAAGASQQA.

This sequence belongs to the heat shock protein 70 family.

Its function is as follows. Acts as a chaperone. The chain is Chaperone protein DnaK from Paraburkholderia phymatum (strain DSM 17167 / CIP 108236 / LMG 21445 / STM815) (Burkholderia phymatum).